The chain runs to 539 residues: Protein pim1 (539 aa).

The disordered stretch occupies residues 1–53 (MTSNRSTRSSTKREEVSKNGVEKRELDESDVMKNGKKPVKRAKVSSLPKPVRV). A compositionally biased stretch (basic and acidic residues) spans 11–33 (TKREEVSKNGVEKRELDESDVMK). Residues 34 to 43 (NGKKPVKRAK) are compositionally biased toward basic residues. RCC1 repeat units lie at residues 70-125 (RLNV…ALSH), 127-191 (GRVY…AITD), 192-243 (NGCC…ALTT), 244-296 (TGKV…AIDN), 298-353 (GRVY…ALLE), 354-417 (DGRV…AVTS), and 419-472 (GKVY…IAGI). A disordered region spans residues 478–539 (EPVANGIKSE…SVLEPSSTTA (62 aa)). Over residues 486 to 504 (SEPENEKKLKTEETSKTDD) the composition is skewed to basic and acidic residues. The span at 514–525 (VTSNGEPSTATS) shows a compositional bias: polar residues.

Oligomer of dis3, pim1 and spi1. Interacts with ned1.

The protein localises to the nucleus. Functionally, promotes the exchange of Ran(spi1)-bound GDP by GTP. Involved in the control of mitosis. Regulates a variety of nuclear events, including mitotic check-point, chromosome decondensation and mRNA processing/transport. The sequence is that of Protein pim1 (pim1) from Schizosaccharomyces pombe (strain 972 / ATCC 24843) (Fission yeast).